The sequence spans 581 residues: Major facilitator superfamily multidrug transporter NAG4 (581 aa).

The segment covering 1–14 (MSHATDSTLDNASV) has biased composition (polar residues). Residues 1–43 (MSHATDSTLDNASVDSEKVRDFGDDLQNHPVQPTRSILSKIRS) form a disordered region. N-linked (GlcNAc...) asparagine glycosylation occurs at Asn-11. Over residues 15–27 (DSEKVRDFGDDLQ) the composition is skewed to basic and acidic residues. The N-linked (GlcNAc...) asparagine glycan is linked to Asn-125. Helical transmembrane passes span 132–152 (WLYT…SAIV), 169–189 (VIIL…PLVF), 199–219 (KPIY…CGAA), 230–250 (LIDG…LADI), 261–281 (AIFS…GGLL), 290–310 (WIYW…IAIV), 365–385 (IVFL…MFFF), 403–423 (GVMF…APFF), 447–467 (LIPM…FAWS), 471–491 (WVSW…FCCL), 510–530 (ALAA…LFTI), and 544–564 (LMAF…FFGA).

The protein belongs to the major facilitator superfamily. DHA1 family. Polyamines/proton antiporter (TC 2.A.1.2.16) subfamily.

The protein resides in the cell membrane. Functionally, MFS transporter involved in N-acetylglucosamine (GlcNAc) uptake. Confers resistance to cycloheximide, 4-nitroquinoline-N-oxide, and 1,10-phenanthroline, and contributes to virulence. This is Major facilitator superfamily multidrug transporter NAG4 from Candida albicans (strain SC5314 / ATCC MYA-2876) (Yeast).